The sequence spans 450 residues: Divalent metal cation transporter MntH (450 aa).

11 consecutive transmembrane segments (helical) span residues 34-54 (LSFL…GNWI), 59-81 (GGAQ…AMLL), 108-128 (IAII…IAEV), 141-161 (IPLI…LFIM), 170-190 (AIVG…VYIS), 212-232 (GILY…NLYL), 263-283 (IQLS…ASLF), 305-325 (PVLG…ALLA), 361-381 (SLAV…AAKI), 383-403 (QLLV…LIPL), and 422-442 (VNII…YLIV).

Belongs to the NRAMP family.

It localises to the cell membrane. Functionally, h(+)-stimulated, divalent metal cation uptake system. The chain is Divalent metal cation transporter MntH from Staphylococcus aureus (strain MRSA252).